The primary structure comprises 43 residues: Phi-Lf prophage-derived putative minor coat protein (43 aa).

This is Phi-Lf prophage-derived putative minor coat protein (gVII-1) from Xanthomonas campestris pv. campestris (strain ATCC 33913 / DSM 3586 / NCPPB 528 / LMG 568 / P 25).